Reading from the N-terminus, the 362-residue chain is Glutamate 5-kinase (362 aa).

An ATP-binding site is contributed by K3. Substrate contacts are provided by S43, D128, and N140. ATP is bound by residues 160-161 (TD) and 202-208 (TGGMRTK). The PUA domain maps to 267 to 348 (AGAILVDAGA…REIENVLGYS (82 aa)).

Belongs to the glutamate 5-kinase family.

Its subcellular location is the cytoplasm. The enzyme catalyses L-glutamate + ATP = L-glutamyl 5-phosphate + ADP. It functions in the pathway amino-acid biosynthesis; L-proline biosynthesis; L-glutamate 5-semialdehyde from L-glutamate: step 1/2. Catalyzes the transfer of a phosphate group to glutamate to form L-glutamate 5-phosphate. This is Glutamate 5-kinase from Xanthomonas oryzae pv. oryzae (strain KACC10331 / KXO85).